A 278-amino-acid polypeptide reads, in one-letter code: Large ribosomal subunit protein uL2 (278 aa).

The disordered stretch occupies residues 223-278 (RGSAMNPNDHPHGGGEGKAPVGRKAPMTPWGKKALGVKTRNKKKASTKLIVRRRTK). The segment covering 261 to 278 (TRNKKKASTKLIVRRRTK) has biased composition (basic residues).

The protein belongs to the universal ribosomal protein uL2 family. In terms of assembly, part of the 50S ribosomal subunit. Forms a bridge to the 30S subunit in the 70S ribosome.

One of the primary rRNA binding proteins. Required for association of the 30S and 50S subunits to form the 70S ribosome, for tRNA binding and peptide bond formation. It has been suggested to have peptidyltransferase activity; this is somewhat controversial. Makes several contacts with the 16S rRNA in the 70S ribosome. This is Large ribosomal subunit protein uL2 from Spiroplasma kunkelii.